The following is a 108-amino-acid chain: DNA-binding protein HBbu (108 aa).

Belongs to the bacterial histone-like protein family.

Its function is as follows. Histone-like DNA-binding protein which is capable of wrapping DNA to stabilize it, and thus to prevent its denaturation under extreme environmental conditions. This Borrelia turicatae protein is DNA-binding protein HBbu (hbb).